The following is a 582-amino-acid chain: L-fucose isomerase (582 aa).

Active-site proton acceptor residues include glutamate 333 and aspartate 357. The Mn(2+) site is built by glutamate 333, aspartate 357, and histidine 520.

It belongs to the L-fucose isomerase family. Mn(2+) is required as a cofactor.

It is found in the cytoplasm. It catalyses the reaction L-fucose = L-fuculose. It functions in the pathway carbohydrate degradation; L-fucose degradation; L-lactaldehyde and glycerone phosphate from L-fucose: step 1/3. Its function is as follows. Converts the aldose L-fucose into the corresponding ketose L-fuculose. The sequence is that of L-fucose isomerase from Vibrio vulnificus (strain YJ016).